The following is a 114-amino-acid chain: Vesicle-associated membrane protein 2 (114 aa).

A compositionally biased stretch (pro residues) spans 1–11 (MSAPAAGPPAA). Positions 1–31 (MSAPAAGPPAAAPGDGAPQGPPNLTSNRRLQ) are disordered. An N-acetylserine modification is found at serine 2. Residues 2–92 (SAPAAGPPAA…KRKYWWKNMK (91 aa)) lie on the Cytoplasmic side of the membrane. A v-SNARE coiled-coil homology domain is found at 29 to 89 (RLQQTQAQVD…AKLKRKYWWK (61 aa)). The helical; Anchor for type IV membrane protein transmembrane segment at 93-111 (MMIIMGVICAIILIIIIVY) threads the bilayer. Residues 112-114 (FST) are Vesicular-facing.

Belongs to the synaptobrevin family.

It is found in the cytoplasmic vesicle. Its subcellular location is the secretory vesicle. The protein localises to the synaptic vesicle membrane. The protein resides in the cell membrane. In terms of biological role, involved in the targeting and/or fusion of transport vesicles to their target membrane. Major SNARE protein of synaptic vesicles which mediates fusion of synaptic vesicles to release neurotransmitters. Essential for fast vesicular exocytosis and activity-dependent neurotransmitter release as well as fast endocytosis that mediates rapid reuse of synaptic vesicles. In Xenopus laevis (African clawed frog), this protein is Vesicle-associated membrane protein 2 (vamp2).